Here is a 603-residue protein sequence, read N- to C-terminus: Elongation factor 4 (603 aa).

The tr-type G domain maps to 5–187 (RHIRNFCIIA…AVVNFVPPPK (183 aa)). Residues 17–22 (DHGKST) and 134–137 (NKID) contribute to the GTP site.

It belongs to the TRAFAC class translation factor GTPase superfamily. Classic translation factor GTPase family. LepA subfamily.

The protein localises to the cell membrane. It carries out the reaction GTP + H2O = GDP + phosphate + H(+). Required for accurate and efficient protein synthesis under certain stress conditions. May act as a fidelity factor of the translation reaction, by catalyzing a one-codon backward translocation of tRNAs on improperly translocated ribosomes. Back-translocation proceeds from a post-translocation (POST) complex to a pre-translocation (PRE) complex, thus giving elongation factor G a second chance to translocate the tRNAs correctly. Binds to ribosomes in a GTP-dependent manner. The protein is Elongation factor 4 of Symbiobacterium thermophilum (strain DSM 24528 / JCM 14929 / IAM 14863 / T).